Reading from the N-terminus, the 941-residue chain is Putative helicase 121R (941 aa).

The stretch at 285–323 forms a coiled coil; it reads LKQELKDIEGENSETIKRNLKDAKDLLKILNKKRANEYN. Residues 492-514 form a disordered region; that stretch reads DDSGRDSEEDSQEEEVSSSQEQL. Residues 498 to 507 are compositionally biased toward acidic residues; the sequence is SEEDSQEEEV. Residues 609–791 enclose the SF3 helicase domain; it reads EEVLELYNFL…FVAREKCPET (183 aa). 653 to 660 lines the ATP pocket; sequence GNGNNGKS.

Belongs to the IIV-6 184L family.

The protein is Putative helicase 121R of Invertebrate iridescent virus 3 (IIV-3).